The primary structure comprises 142 residues: Transcriptional regulator MraZ (142 aa).

SpoVT-AbrB domains follow at residues Ala-5–Val-51 and Ala-77–Lys-120.

The protein belongs to the MraZ family. In terms of assembly, forms oligomers.

It localises to the cytoplasm. The protein resides in the nucleoid. This chain is Transcriptional regulator MraZ, found in Janthinobacterium sp. (strain Marseille) (Minibacterium massiliensis).